Here is a 393-residue protein sequence, read N- to C-terminus: MTGPATRKDLMIVNMGPHHPSMHGVLRLIVTLDGEDVIDCEPILGYLHRGMEKIAENRTIIQYLPYVTRWDYLATMFTEAITVNAPEQLGNIQVPKRASYIRVIMLELSRIASHLLWLGPFMADIGAQTPFFYIFRERELIYDLFEAATGMRMMHNFFRIGGIAADLPHGWIDKCLDFCDYFLTGIAEYQKLITRNPIFLERVEGVGIIGGEEAINWGLSGPMLRASGIQWDLRKVDHYECYDEFDWEVQWQNEGDSLARYLVRISEMTESIKIIQQALEGIPGGPYENLEIRRFDRVKDTVWNEFDYRFISKKPSPTFELSKQELYARVEAPKGELGIFLIGDKGVFPWRYKIRPPGFINLQILPQLVKRMKLADIMTILGSIDIIMGEVDR.

Belongs to the complex I 49 kDa subunit family. In terms of assembly, NDH is composed of at least 16 different subunits, 5 of which are encoded in the nucleus.

Its subcellular location is the plastid. The protein resides in the chloroplast thylakoid membrane. The enzyme catalyses a plastoquinone + NADH + (n+1) H(+)(in) = a plastoquinol + NAD(+) + n H(+)(out). It catalyses the reaction a plastoquinone + NADPH + (n+1) H(+)(in) = a plastoquinol + NADP(+) + n H(+)(out). NDH shuttles electrons from NAD(P)H:plastoquinone, via FMN and iron-sulfur (Fe-S) centers, to quinones in the photosynthetic chain and possibly in a chloroplast respiratory chain. The immediate electron acceptor for the enzyme in this species is believed to be plastoquinone. Couples the redox reaction to proton translocation, and thus conserves the redox energy in a proton gradient. The sequence is that of NAD(P)H-quinone oxidoreductase subunit H, chloroplastic from Lactuca sativa (Garden lettuce).